Reading from the N-terminus, the 228-residue chain is UPF0758 protein str1465 (228 aa).

An MPN domain is found at 103–225 (QIMSSQQVAR…YYSFREERED (123 aa)). Zn(2+) is bound by residues His174, His176, and Asp187. Residues 174–187 (HNHPSGEAYPSRND) carry the JAMM motif motif.

This sequence belongs to the UPF0758 family.

The polypeptide is UPF0758 protein str1465 (Streptococcus thermophilus (strain CNRZ 1066)).